We begin with the raw amino-acid sequence, 338 residues long: GNSVLSGFNVEFLAHSLNTKEDTAKRLRSPQDERGQIVKVEDGLHIISPELQEEEEQSHSQRKEEEEEEQEQRHRKHSKKEDEDEDEEEEEEREQRHRKHSEKEEEDEDEPRSYETRRKWKKHTAEKKRESHGQGEEEEELEKEEEEEEEIQRQHSKGRKNGLEETICSAKIRENIARPSRGDLYNSGAGRISTVNSLTLPILRNLRLSAEYVLLYRNGIYAPHWNINANSLLYVIRGEGRVRIVNSEGNKVFDDKVSLGQLVVVPQNFVVAQQAGNEEGFEYVVFKTNDRAAVSHVNQVFRATPGEVLANAFGLRHSQVAQIKSNGNRGPLVQPQSQ.

Residues 16–162 form a disordered region; the sequence is SLNTKEDTAK…RQHSKGRKNG (147 aa). A compositionally biased stretch (basic and acidic residues) spans 18–44; that stretch reads NTKEDTAKRLRSPQDERGQIVKVEDGL. Composition is skewed to acidic residues over residues 82 to 92 and 136 to 150; these read DEDEDEEEEEE and EEEE…EEEE. Positions 174 to 321 constitute a Cupin type-1 domain; that stretch reads ENIARPSRGD…AFGLRHSQVA (148 aa).

This sequence belongs to the 11S seed storage protein (globulins) family. As to quaternary structure, hexamer; each subunit is composed of an acidic and a basic chain derived from a single precursor and linked by a disulfide bond.

Its function is as follows. This protein found in the seeds of many leguminous and non-leguminous plants is the source of sulfur-containing amino acids in seed meals. This is Legumin B (LEGB) from Pisum sativum (Garden pea).